A 346-amino-acid chain; its full sequence is Heterogeneous nuclear ribonucleoprotein A1 (346 aa).

RRM domains are found at residues 23-123 (RKIF…GVRE) and 114-191 (KRLY…KGLS). 2 stretches are compositionally biased toward basic and acidic residues: residues 92-107 (TVDP…KNRS) and 189-215 (GLSK…RDGQ). 2 disordered regions span residues 92–111 (TVDP…ESNV) and 189–346 (GLSK…NRNY). Composition is skewed to gly residues over residues 216 to 296 (RGGY…GWGG) and 303 to 331 (GGWG…GGQS). The segment covering 332 to 346 (GAQQWAHAQGGNRNY) has biased composition (low complexity).

It localises to the nucleus. The protein resides in the chromosome. Its subcellular location is the telomere. Its function is as follows. This protein is a component of ribonucleosomes. Overexpression gradually increases telomere length, leading to increase lifespan. The polypeptide is Heterogeneous nuclear ribonucleoprotein A1 (Caenorhabditis elegans).